A 587-amino-acid chain; its full sequence is MTPTQNEIHPKHSYSPIRKDGLEVPETEIRLDDSPSGPNEPFRIYRTRGPETNPKQGLPRLRESWITARGDVATYQGRERLLIDDGRSAMRRGQASAEWKGQKPAPLKALPGKRVTQMAYARAGVITREMEFVALREHVDAEFVRSEVARGRAIIPNNVNHPESEPMIIGRKFLTKINANIGNSAVTSSIEEEVSKLQWATRWGADTVMDLSTGDDIHTTREWIIRNSPVPIGTVPIYQALEKVNGVAADLNWEVFRDTIIEQCEQGVDYMTIHAGVLLAYIPLTTRRVTGIVSRGGSIMAGWCLAHHRESFLYEHFDELCEIFAQYDVAFSLGDGLRPGSLADANDAAQFAELKTIGELTQRAWEYDVQVMVEGPGHVPLNMIQENNELEQKWAADAPFYTLGPLVTDIAPGYDHITSAIGAAHIAMGGTAMLCYVTPKEHLGLPNRDDVKTGVITYKLAAHAADVAKGHPGARAWDDAMSKARFEFRWNDQFALSLDPDTAIAYHDETLPAEPAKTAHFCSMCGPKFCSMRISQDIRDMFGDQIAELGMPGVGDSSSAVASSGAREGMAEKSREFIAGGAEVYRR.

Residues 1 to 58 (MTPTQNEIHPKHSYSPIRKDGLEVPETEIRLDDSPSGPNEPFRIYRTRGPETNPKQGL) are disordered. Over residues 17 to 33 (IRKDGLEVPETEIRLDD) the composition is skewed to basic and acidic residues. Residues Asn180, Met209, Tyr238, His274, 294–296 (SRG), 335–338 (DGLR), and Glu374 contribute to the substrate site. His378 provides a ligand contact to Zn(2+). Residue Tyr401 participates in substrate binding. His442 provides a ligand contact to Zn(2+). [4Fe-4S] cluster contacts are provided by Cys522, Cys525, and Cys530.

Belongs to the ThiC family. It depends on [4Fe-4S] cluster as a cofactor.

The enzyme catalyses 5-amino-1-(5-phospho-beta-D-ribosyl)imidazole + S-adenosyl-L-methionine = 4-amino-2-methyl-5-(phosphooxymethyl)pyrimidine + CO + 5'-deoxyadenosine + formate + L-methionine + 3 H(+). It functions in the pathway cofactor biosynthesis; thiamine diphosphate biosynthesis. In terms of biological role, catalyzes the synthesis of the hydroxymethylpyrimidine phosphate (HMP-P) moiety of thiamine from aminoimidazole ribotide (AIR) in a radical S-adenosyl-L-methionine (SAM)-dependent reaction. The sequence is that of Phosphomethylpyrimidine synthase from Corynebacterium glutamicum (strain ATCC 13032 / DSM 20300 / JCM 1318 / BCRC 11384 / CCUG 27702 / LMG 3730 / NBRC 12168 / NCIMB 10025 / NRRL B-2784 / 534).